Here is a 524-residue protein sequence, read N- to C-terminus: Inorganic phosphate transporter 1-1 (524 aa).

Over Met1–Ala24 the chain is Cytoplasmic. The helical transmembrane segment at Ile25–Val45 threads the bilayer. Over Thr46–Ala70 the chain is Extracellular. The helical transmembrane segment at Ala71–Leu91 threads the bilayer. Over Gly92–Lys99 the chain is Cytoplasmic. A helical membrane pass occupies residues Val100 to Gly120. The Extracellular segment spans residues His121–Cys131. A helical transmembrane segment spans residues Phe132–Met152. Topologically, residues Ser153–Arg161 are cytoplasmic. A helical membrane pass occupies residues Gly162–Val182. The Extracellular portion of the chain corresponds to Ala183–Val211. The helical transmembrane segment at Asp212–Trp232 threads the bilayer. Residues Arg233 to Arg292 are Cytoplasmic-facing. The chain crosses the membrane as a helical span at residues His293–Ser313. Residues Gln314 to Thr348 are Extracellular-facing. Residues Leu349–Ile369 form a helical membrane-spanning segment. The Cytoplasmic portion of the chain corresponds to Gly370–Arg371. Residues Phe372 to Pro392 form a helical membrane-spanning segment. The Extracellular portion of the chain corresponds to Tyr393–Arg402. A helical membrane pass occupies residues Ile403 to Thr423. Over Thr424–His441 the chain is Cytoplasmic. A helical transmembrane segment spans residues Gly442–Ala462. Residues Ala463–Ser484 are Extracellular-facing. The chain crosses the membrane as a helical span at residues Leu485 to Pro505. At Lys506–Lys524 the chain is on the cytoplasmic side.

The protein belongs to the major facilitator superfamily. Phosphate:H(+) symporter (TC 2.A.1.9) family. In terms of assembly, interacts with NLA. Ubiquitinated by NLA. Ubiquitination of PHT1-1 leads to its degradation by the proteasome. Mostly expressed in roots, especially in trichoblasts and in emerging secondary roots and root hairs, but not in root tips. Also present in hydathodes, axillary buds and peripheral endosperm of germinating seeds.

It is found in the cell membrane. Inhibited by protonophores (e.g. 2,4-dinitrophenol and carbonylcyanide m-chlorophenylhydrazone), the plasma membrane H(+)-ATPase inhibitor diethylstilbestorol, and the phosphate analog arsenate. In terms of biological role, high-affinity transporter for external inorganic phosphate. Acts as a H(+):phosphate symporter in both low- and high-Pi conditions. Confers sensitivity to arsenate. The chain is Inorganic phosphate transporter 1-1 (PHT1-1) from Arabidopsis thaliana (Mouse-ear cress).